The primary structure comprises 311 residues: L-lactate dehydrogenase 2 (311 aa).

Residues V14, D35, and R40 each coordinate NAD(+). Substrate is bound by residues R90 and N122–D125. NAD(+)-binding positions include A120–N122 and T145. Position 150–153 (D150–R153) interacts with substrate. The Proton acceptor role is filled by H177. Position 230 (T230) interacts with substrate.

Belongs to the LDH/MDH superfamily. LDH family. Homotetramer.

Its subcellular location is the cytoplasm. The catalysed reaction is (S)-lactate + NAD(+) = pyruvate + NADH + H(+). It functions in the pathway fermentation; pyruvate fermentation to lactate; (S)-lactate from pyruvate: step 1/1. Its function is as follows. Catalyzes the conversion of lactate to pyruvate. The protein is L-lactate dehydrogenase 2 of Listeria monocytogenes serovar 1/2a (strain ATCC BAA-679 / EGD-e).